We begin with the raw amino-acid sequence, 644 residues long: Threonine--tRNA ligase (644 aa).

Residues 1-61 form the TGS domain; it reads MVAITLPDGS…VADAKVEIVT (61 aa). A catalytic region spans residues 242 to 533; sequence DHRKIGKALN…LIENYAGWMP (292 aa). Positions 333, 384, and 510 each coordinate Zn(2+).

The protein belongs to the class-II aminoacyl-tRNA synthetase family. Homodimer. Requires Zn(2+) as cofactor.

The protein resides in the cytoplasm. It catalyses the reaction tRNA(Thr) + L-threonine + ATP = L-threonyl-tRNA(Thr) + AMP + diphosphate + H(+). Catalyzes the attachment of threonine to tRNA(Thr) in a two-step reaction: L-threonine is first activated by ATP to form Thr-AMP and then transferred to the acceptor end of tRNA(Thr). Also edits incorrectly charged L-seryl-tRNA(Thr). The sequence is that of Threonine--tRNA ligase from Psychrobacter arcticus (strain DSM 17307 / VKM B-2377 / 273-4).